We begin with the raw amino-acid sequence, 461 residues long: Cysteine--tRNA ligase (461 aa).

C28 serves as a coordination point for Zn(2+). The 'HIGH' region signature appears at V30–H40. Positions 211, 236, and 240 each coordinate Zn(2+). The short motif at K268–S272 is the 'KMSKS' region element. ATP is bound at residue K271.

The protein belongs to the class-I aminoacyl-tRNA synthetase family. Monomer. Zn(2+) is required as a cofactor.

Its subcellular location is the cytoplasm. The catalysed reaction is tRNA(Cys) + L-cysteine + ATP = L-cysteinyl-tRNA(Cys) + AMP + diphosphate. The protein is Cysteine--tRNA ligase of Aliivibrio fischeri (strain ATCC 700601 / ES114) (Vibrio fischeri).